A 512-amino-acid polypeptide reads, in one-letter code: Maturase K (512 aa).

Belongs to the intron maturase 2 family. MatK subfamily.

The protein localises to the plastid. The protein resides in the chloroplast. Functionally, usually encoded in the trnK tRNA gene intron. Probably assists in splicing its own and other chloroplast group II introns. The protein is Maturase K of Daucus carota (Wild carrot).